The chain runs to 350 residues: tRNA uridine(34) hydroxylase (350 aa).

One can recognise a Rhodanese domain in the interval 146–240 (DDPDAIFIDM…YARRAREQGL (95 aa)). C200 serves as the catalytic Cysteine persulfide intermediate. The tract at residues 318–350 (QRRRRAGREKGNKIFNKSRGRLNSKLGIPDPTE) is disordered.

This sequence belongs to the TrhO family.

The catalysed reaction is uridine(34) in tRNA + AH2 + O2 = 5-hydroxyuridine(34) in tRNA + A + H2O. Catalyzes oxygen-dependent 5-hydroxyuridine (ho5U) modification at position 34 in tRNAs. The sequence is that of tRNA uridine(34) hydroxylase from Salmonella arizonae (strain ATCC BAA-731 / CDC346-86 / RSK2980).